We begin with the raw amino-acid sequence, 601 residues long: 66 kDa stress protein (601 aa).

WD repeat units lie at residues 56-95 (EHAQ…HPLK), 100-143 (VLSG…GEIT), 145-184 (HSKA…FKHA), 187-226 (EHTR…KVGA), 233-272 (AHAL…LTTF), 318-357 (GHNK…AVPI), 435-478 (ASTT…LSEQ), 483-522 (GHRG…IKVE), 526-565 (YHNA…KHIA), and 569-600 (AHRG…WTIK).

It belongs to the WD repeat AIP1 family.

In terms of biological role, associated with the process of cyst formation. The protein is 66 kDa stress protein of Physarum polycephalum (Slime mold).